Here is a 187-residue protein sequence, read N- to C-terminus: MADRDRSGIYGGAHATYGQQQQQGGGGRPMGEQVKKGMLHDKGPTASQALTVATLFPLGGLLLVLSGLALTASVVGLAVATPVFLIFSPVLVPAALLIGTAVMGFLTSGALGLGGLSSLTCLANTARQAFQRTPDYVEEARRRMAEAAAQAGHKTAQAGQAIQGRAQEAGTGGGAGAGAGGGGRASS.

Ala2 carries the post-translational modification N-acetylalanine. A polar region spans residues 2–51 (ADRDRSGIYGGAHATYGQQQQQGGGGRPMGEQVKKGMLHDKGPTASQALT). Positions 17-42 (YGQQQQQGGGGRPMGEQVKKGMLHDK) are disordered. Residues 33-42 (QVKKGMLHDK) are compositionally biased toward basic and acidic residues. 3 helical membrane passes run 50–70 (LTVA…GLAL), 83–103 (VFLI…TAVM), and 104–124 (GFLT…CLAN). A hydrophobic region spans residues 52–123 (VATLFPLGGL…GGLSSLTCLA (72 aa)). A compositionally biased stretch (low complexity) spans 155 to 169 (TAQAGQAIQGRAQEA). Residues 155 to 187 (TAQAGQAIQGRAQEAGTGGGAGAGAGGGGRASS) are disordered. The segment covering 170–187 (GTGGGAGAGAGGGGRASS) has biased composition (gly residues).

It belongs to the oleosin family. Post-translationally, the N-terminus is blocked. As to expression, found in embryonic axis, scutellum, and aleurone layer.

The protein resides in the lipid droplet. Its subcellular location is the membrane. Functionally, may have a structural role to stabilize the lipid body during desiccation of the seed by preventing coalescence of the oil. Probably interacts with both lipid and phospholipid moieties of lipid bodies. May also provide recognition signals for specific lipase anchorage in lipolysis during seedling growth. The polypeptide is Oleosin Zm-II (OLE18) (Zea mays (Maize)).